The following is a 470-amino-acid chain: Suppressor of SWI4 1 homolog (470 aa).

The Brix domain occupies 29-292 (PHSFVFTRGR…LIKIQEGVGN (264 aa)). Phosphoserine is present on residues Ser-238 and Ser-240. 2 disordered regions span residues 240 to 264 (SEVEPDGEHNTTELPQAVAGRGNMQ) and 323 to 470 (AQRQ…RRRN). The segment covering 342–355 (AHKKKSLAGIKRAR) has biased composition (basic residues). Ser-362 bears the Phosphoserine mark. The residue at position 441 (Lys-441) is an N6-acetyllysine. The segment covering 447–457 (QRGKAKPRPRA) has biased composition (basic residues).

It localises to the nucleus. The protein localises to the nucleolus. In terms of biological role, may have a role in cell growth. This chain is Suppressor of SWI4 1 homolog (Ppan), found in Mus musculus (Mouse).